The following is a 187-amino-acid chain: Elongation factor P (187 aa).

It belongs to the elongation factor P family.

The protein localises to the cytoplasm. Its pathway is protein biosynthesis; polypeptide chain elongation. In terms of biological role, involved in peptide bond synthesis. Stimulates efficient translation and peptide-bond synthesis on native or reconstituted 70S ribosomes in vitro. Probably functions indirectly by altering the affinity of the ribosome for aminoacyl-tRNA, thus increasing their reactivity as acceptors for peptidyl transferase. In Fusobacterium nucleatum subsp. nucleatum (strain ATCC 25586 / DSM 15643 / BCRC 10681 / CIP 101130 / JCM 8532 / KCTC 2640 / LMG 13131 / VPI 4355), this protein is Elongation factor P.